Here is a 439-residue protein sequence, read N- to C-terminus: Xylose isomerase (439 aa).

Catalysis depends on residues His101 and Asp104. Mg(2+) contacts are provided by Glu232, Glu268, His271, Asp296, Asp307, Asp309, and Asp339.

This sequence belongs to the xylose isomerase family. Homotetramer. Mg(2+) serves as cofactor.

The protein resides in the cytoplasm. The enzyme catalyses alpha-D-xylose = alpha-D-xylulofuranose. This is Xylose isomerase from Histophilus somni (strain 2336) (Haemophilus somnus).